Here is a 381-residue protein sequence, read N- to C-terminus: tRNA pseudouridine synthase D (381 aa).

The Nucleophile role is filled by Asp81. A TRUD domain is found at 160 to 335; it reads GMPNYFGSQR…TLGSRRFFWV (176 aa).

The protein belongs to the pseudouridine synthase TruD family.

The catalysed reaction is uridine(13) in tRNA = pseudouridine(13) in tRNA. Responsible for synthesis of pseudouridine from uracil-13 in transfer RNAs. This is tRNA pseudouridine synthase D from Helicobacter pylori (strain G27).